Consider the following 257-residue polypeptide: Coenzyme F420:L-glutamate ligase (257 aa).

GTP is bound by residues 9 to 12 (VPEV), 38 to 39 (ST), and lysine 43. Position 113 (aspartate 113) interacts with a divalent metal cation. Asparagine 116 serves as a coordination point for GTP. Residues aspartate 154, threonine 155, and glutamate 212 each contribute to the a divalent metal cation site. Residue 210 to 217 (TGEGDGGT) participates in GTP binding.

Belongs to the CofE family. As to quaternary structure, homodimer. Mg(2+) serves as cofactor. The cofactor is Mn(2+). Requires K(+) as cofactor.

It catalyses the reaction oxidized coenzyme F420-0 + GTP + L-glutamate = oxidized coenzyme F420-1 + GDP + phosphate + H(+). It carries out the reaction oxidized coenzyme F420-1 + GTP + L-glutamate = oxidized coenzyme F420-2 + GDP + phosphate + H(+). It functions in the pathway cofactor biosynthesis; coenzyme F420 biosynthesis. In terms of biological role, catalyzes the GTP-dependent successive addition of two or more gamma-linked L-glutamates to the L-lactyl phosphodiester of 7,8-didemethyl-8-hydroxy-5-deazariboflavin (F420-0) to form coenzyme F420-0-glutamyl-glutamate (F420-2) or polyglutamated F420 derivatives. The sequence is that of Coenzyme F420:L-glutamate ligase from Haloarcula marismortui (strain ATCC 43049 / DSM 3752 / JCM 8966 / VKM B-1809) (Halobacterium marismortui).